Reading from the N-terminus, the 602-residue chain is Carbon catabolite repressor protein 4 homolog 1 (602 aa).

The segment at 113 to 136 is disordered; sequence ASAATEGNDEEELPRLNSSGSGSG. Mg(2+) is bound at residue E299.

It belongs to the CCR4/nocturin family. As to quaternary structure, component of the CCR4-NOT complex, at least composed of CRR4 and CAF1 proteins. Mg(2+) serves as cofactor.

The protein resides in the nucleus. It localises to the cytoplasm. The catalysed reaction is Exonucleolytic cleavage of poly(A) to 5'-AMP.. In terms of biological role, acts as a catalytic component of the CCR4-NOT core complex, which in the nucleus seems to be a general transcription factor, and in the cytoplasm the major mRNA deadenylase involved in mRNA turnover. In Arabidopsis thaliana (Mouse-ear cress), this protein is Carbon catabolite repressor protein 4 homolog 1 (CCR4-1).